The sequence spans 475 residues: MKIIQTAVEFAPFIKAGGLGDAVYGLSKALSESHDVEVLLPFFPLITPSFSSQVIDEKVFSYEFLGRQHAHSISYSYEGMILTIIKLDSQLDLFSTSTIYTEDDTLRFSAFSAAAAAYIGELDHVDIVHMHDWHMGLLSGLLKEPNRPHYPKRIFTIHNFSYRGYCSTQLLGTSGISDFGLSNYQLYRDPQMSVLLKGALYCSDYITTVSPTYAQEILNDYSDYEMHDAIMARRHVFCGILNGIDEQIWNPETDASLAVNYSKDLLDAPDVLFTKKEENKNALYEKLGLSYEYSPLMCIISRIVEQKGPEFMKAAILHAMENGYALVIVGTCYDPEIQRKFTNLQESLTTSPNIRIILDYNDPLARLVYGAADMICIPSHFEPCGLTQLIGMRYGTVPLVRSTGGLADTVVTGINGFTFSQTDNFNDFLHMLTLAITTYRQEPDIWFQLVEEGMLRSSGLTTMAIHYLGVYNSLL.

K15 serves as a coordination point for ADP-alpha-D-glucose.

Belongs to the glycosyltransferase 1 family. Bacterial/plant glycogen synthase subfamily.

The catalysed reaction is [(1-&gt;4)-alpha-D-glucosyl](n) + ADP-alpha-D-glucose = [(1-&gt;4)-alpha-D-glucosyl](n+1) + ADP + H(+). Its pathway is glycan biosynthesis; glycogen biosynthesis. In terms of biological role, synthesizes alpha-1,4-glucan chains using ADP-glucose. This chain is Glycogen synthase, found in Chlamydia caviae (strain ATCC VR-813 / DSM 19441 / 03DC25 / GPIC) (Chlamydophila caviae).